Reading from the N-terminus, the 718-residue chain is Methionine--tRNA ligase (718 aa).

Positions 12–22 match the 'HIGH' region motif; it reads PYANGDIHLGH. C143, C146, C156, and C159 together coordinate Zn(2+). The 'KMSKS' region signature appears at 349 to 353; sequence KMSKS. K352 is an ATP binding site. Positions 573 to 599 are disordered; sequence AAPAAKVASSQQRHAEKQQHEAQSAET. In terms of domain architecture, tRNA-binding spans 608–718; it reads DFTKVDLRIA…TGAASGMRVK (111 aa).

This sequence belongs to the class-I aminoacyl-tRNA synthetase family. MetG type 1 subfamily. In terms of assembly, homodimer. The cofactor is Zn(2+).

Its subcellular location is the cytoplasm. It carries out the reaction tRNA(Met) + L-methionine + ATP = L-methionyl-tRNA(Met) + AMP + diphosphate. Is required not only for elongation of protein synthesis but also for the initiation of all mRNA translation through initiator tRNA(fMet) aminoacylation. The chain is Methionine--tRNA ligase from Aromatoleum aromaticum (strain DSM 19018 / LMG 30748 / EbN1) (Azoarcus sp. (strain EbN1)).